The primary structure comprises 231 residues: Flagellar L-ring protein (231 aa).

The first 18 residues, 1–18, serve as a signal peptide directing secretion; sequence MKHLLSVFALGGAVLLAG. Cys19 is lipidated: N-palmitoyl cysteine. A lipid anchor (S-diacylglycerol cysteine) is attached at Cys19.

It belongs to the FlgH family. The basal body constitutes a major portion of the flagellar organelle and consists of four rings (L,P,S, and M) mounted on a central rod.

The protein localises to the cell outer membrane. Its subcellular location is the bacterial flagellum basal body. In terms of biological role, assembles around the rod to form the L-ring and probably protects the motor/basal body from shearing forces during rotation. This is Flagellar L-ring protein from Pseudomonas entomophila (strain L48).